Consider the following 135-residue polypeptide: uncharacterized protein (135 aa).

This sequence belongs to the transcriptional regulatory CopG/NikR family.

This is an uncharacterized protein from Methanocaldococcus jannaschii (strain ATCC 43067 / DSM 2661 / JAL-1 / JCM 10045 / NBRC 100440) (Methanococcus jannaschii).